The following is a 113-amino-acid chain: Large ribosomal subunit protein uL22 (113 aa).

The protein belongs to the universal ribosomal protein uL22 family. In terms of assembly, part of the 50S ribosomal subunit.

This protein binds specifically to 23S rRNA; its binding is stimulated by other ribosomal proteins, e.g. L4, L17, and L20. It is important during the early stages of 50S assembly. It makes multiple contacts with different domains of the 23S rRNA in the assembled 50S subunit and ribosome. Its function is as follows. The globular domain of the protein is located near the polypeptide exit tunnel on the outside of the subunit, while an extended beta-hairpin is found that lines the wall of the exit tunnel in the center of the 70S ribosome. The protein is Large ribosomal subunit protein uL22 of Xanthomonas oryzae pv. oryzae (strain MAFF 311018).